Reading from the N-terminus, the 292-residue chain is Nitrogenase iron protein (292 aa).

Gly8 to Ser15 provides a ligand contact to ATP. Cys96 serves as a coordination point for [4Fe-4S] cluster. Arg99 carries the post-translational modification ADP-ribosylarginine; by dinitrogenase reductase ADP-ribosyltransferase. [4Fe-4S] cluster is bound at residue Cys130.

It belongs to the NifH/BchL/ChlL family. In terms of assembly, homodimer. It depends on [4Fe-4S] cluster as a cofactor. Post-translationally, the reversible ADP-ribosylation of Arg-99 inactivates the nitrogenase reductase and regulates nitrogenase activity.

The catalysed reaction is N2 + 8 reduced [2Fe-2S]-[ferredoxin] + 16 ATP + 16 H2O = H2 + 8 oxidized [2Fe-2S]-[ferredoxin] + 2 NH4(+) + 16 ADP + 16 phosphate + 6 H(+). Functionally, the key enzymatic reactions in nitrogen fixation are catalyzed by the nitrogenase complex, which has 2 components: the iron protein and the molybdenum-iron protein. The sequence is that of Nitrogenase iron protein from Synechococcus sp. (strain JA-3-3Ab) (Cyanobacteria bacterium Yellowstone A-Prime).